The chain runs to 119 residues: Large ribosomal subunit protein bL20 (119 aa).

The protein belongs to the bacterial ribosomal protein bL20 family.

In terms of biological role, binds directly to 23S ribosomal RNA and is necessary for the in vitro assembly process of the 50S ribosomal subunit. It is not involved in the protein synthesizing functions of that subunit. This Nitrosomonas eutropha (strain DSM 101675 / C91 / Nm57) protein is Large ribosomal subunit protein bL20.